An 824-amino-acid polypeptide reads, in one-letter code: Lon protease (824 aa).

Positions 1 to 23 (MNEPMSLFDDLPEEHDEPQEAPE) are disordered. The span at 10–20 (DLPEEHDEPQE) shows a compositional bias: acidic residues. A Lon N-terminal domain is found at 26–222 (LPMVVLGEMV…KVYLVLARQL (197 aa)). 375-382 (GPPGVGKT) provides a ligand contact to ATP. The 182-residue stretch at 617 to 798 (QDEVGVATGV…DEVLRIALSR (182 aa)) folds into the Lon proteolytic domain. Catalysis depends on residues Ser-704 and Lys-747. Positions 800–824 (PTPANNQNGSHTNNRGQPSPAPAGT) are disordered. The segment covering 802 to 816 (PANNQNGSHTNNRGQ) has biased composition (polar residues).

It belongs to the peptidase S16 family. Homohexamer. Organized in a ring with a central cavity.

It is found in the cytoplasm. It carries out the reaction Hydrolysis of proteins in presence of ATP.. Functionally, ATP-dependent serine protease that mediates the selective degradation of mutant and abnormal proteins as well as certain short-lived regulatory proteins. Required for cellular homeostasis and for survival from DNA damage and developmental changes induced by stress. Degrades polypeptides processively to yield small peptide fragments that are 5 to 10 amino acids long. Binds to DNA in a double-stranded, site-specific manner. This is Lon protease from Chloroflexus aggregans (strain MD-66 / DSM 9485).